The following is a 540-amino-acid chain: ATP-dependent RNA helicase DBP5 (540 aa).

Composition is skewed to basic and acidic residues over residues 24 to 36 (KSGE…KKGS) and 50 to 119 (KEGD…EPKE). Positions 24–124 (KSGEKLEEIK…KEPKEPATNL (101 aa)) are disordered. The Q motif motif lies at 150 to 178 (KSFEELGLSPELLKGLYAMKFNKPSKIQE). Positions 183 to 350 (LLLSNPPRNM…ERLVPDANSL (168 aa)) constitute a Helicase ATP-binding domain. Residue 196–203 (SQSGTGKT) coordinates ATP. The DEAD box motif lies at 297–300 (DEAD). The Helicase C-terminal domain occupies 361 to 538 (GIKQLYMDCR…EVEKIVKKVI (178 aa)).

It belongs to the DEAD box helicase family. DDX19/DBP5 subfamily. Associates with the nuclear pore complex.

It localises to the cytoplasm. It is found in the nucleus. The protein localises to the nuclear pore complex. Its subcellular location is the nucleus membrane. It carries out the reaction ATP + H2O = ADP + phosphate + H(+). ATP-dependent RNA helicase associated with the nuclear pore complex and essential for mRNA export from the nucleus. May participate in a terminal step of mRNA export through the removal of proteins that accompany mRNA through the nucleopore complex. May also be involved in early transcription. The protein is ATP-dependent RNA helicase DBP5 (DBP5) of Candida albicans (strain SC5314 / ATCC MYA-2876) (Yeast).